Consider the following 95-residue polypeptide: NADH-quinone oxidoreductase subunit K (95 aa).

The next 3 membrane-spanning stretches (helical) occupy residues 1-21 (MSYL…VLTR), 25-45 (ILVF…LVGF), and 59-79 (MVIA…VAIF).

Belongs to the complex I subunit 4L family. NDH-1 is composed of 15 different subunits. Subunits NuoA, H, J, K, L, M, N constitute the membrane sector of the complex.

It is found in the cell inner membrane. It carries out the reaction a quinone + NADH + 5 H(+)(in) = a quinol + NAD(+) + 4 H(+)(out). NDH-1 shuttles electrons from NADH, via FMN and iron-sulfur (Fe-S) centers, to quinones in the respiratory chain. The immediate electron acceptor for the enzyme in this species is believed to be a menaquinone. Couples the redox reaction to proton translocation (for every two electrons transferred, four hydrogen ions are translocated across the cytoplasmic membrane), and thus conserves the redox energy in a proton gradient. This chain is NADH-quinone oxidoreductase subunit K, found in Thermus thermophilus (strain ATCC BAA-163 / DSM 7039 / HB27).